The following is a 78-amino-acid chain: uncharacterized protein (78 aa).

The next 2 membrane-spanning stretches (helical) occupy residues 12-32 and 51-71; these read LVSV…ICVV and GVGA…VAVH.

Its subcellular location is the cell membrane. This is an uncharacterized protein from Treponema pallidum (strain Nichols).